A 787-amino-acid chain; its full sequence is ER degradation-enhancing alpha-mannosidase-like protein 1 (787 aa).

The first 22 residues, 1–22, serve as a signal peptide directing secretion; the sequence is MGSLHSIFCVCLILLCIFKENS. N-linked (GlcNAc...) asparagine glycans are attached at residues asparagine 479, asparagine 609, asparagine 670, asparagine 693, and asparagine 756.

It belongs to the glycosyl hydrolase 47 family.

The protein resides in the endoplasmic reticulum lumen. Its function is as follows. Alpha-mannosidase-like protein involved in endoplasmic reticulum-associated degradation (ERAD). Delivers misfolded glycoproteins to proteasomes. It lacks mannosidase activity. The polypeptide is ER degradation-enhancing alpha-mannosidase-like protein 1 (mnl1) (Schizosaccharomyces pombe (strain 972 / ATCC 24843) (Fission yeast)).